The sequence spans 103 residues: Secreted LysM effector Mgx1LysM (103 aa).

Residues 1–18 form the signal peptide; it reads MKVTTIIAALLSVAVVDA. 2 cysteine pairs are disulfide-bonded: Cys31-Cys89 and Cys62-Cys97. The region spanning 37–85 is the LysM domain; sequence IPYVVKKGDTLTHIAHDIYKRKVGICDLAYTNHIGYNPDLIYEDQTLLI. Chitin is bound by residues Gly44, Thr48, Asp75, and Ile77.

Belongs to the secreted LysM effector family. Forms homodimers in a chitin-independent manner through interactions at the N-termini of Mgx1LysM monomers. Homodimers are further polymerized in a chitin-dependent manner.

The protein localises to the secreted. The protein resides in the cell wall. Functionally, secreted effector that enables the plant pathogenic fungus to manipulate host defenses for successful infection. Binds chitin and suppresses the chitin-induced reactive oxygen species (ROS) burst. Chitin-induced polymerization of homodimers forms a contiguous Mg1LysM highly oligomeric super-complexe that is anchored to the chitin in the fungal cell wall to prevent hydrolysis by host chitinases. In Zymoseptoria tritici (strain CBS 115943 / IPO323) (Speckled leaf blotch fungus), this protein is Secreted LysM effector Mgx1LysM.